The following is a 258-amino-acid chain: Isoprenyl transferase (258 aa).

D38 is a catalytic residue. Position 38 (D38) interacts with Mg(2+). Substrate is bound by residues 39 to 42, W43, R51, H55, and 83 to 85; these read GNGR and STE. N86 serves as the catalytic Proton acceptor. Substrate is bound by residues W87, R89, R206, and 212 to 214; that span reads RIS. Position 225 (E225) interacts with Mg(2+).

This sequence belongs to the UPP synthase family. As to quaternary structure, homodimer. Mg(2+) is required as a cofactor.

Its function is as follows. Catalyzes the condensation of isopentenyl diphosphate (IPP) with allylic pyrophosphates generating different type of terpenoids. The protein is Isoprenyl transferase of Bacillus cereus (strain ATCC 10987 / NRS 248).